The sequence spans 60 residues: Large ribosomal subunit protein bL32 (60 aa).

The segment covering 1-23 (MACPKKKTSNAKRDQRRAHWRKQ) has biased composition (basic residues). The disordered stretch occupies residues 1 to 60 (MACPKKKTSNAKRDQRRAHWRKQAAREAQKALSLGKSVLSGRSNSFVYPTKEEEEGEDEE).

It belongs to the bacterial ribosomal protein bL32 family.

The polypeptide is Large ribosomal subunit protein bL32 (Microcystis aeruginosa (strain NIES-843 / IAM M-2473)).